The primary structure comprises 139 residues: ATP synthase epsilon chain (139 aa).

This sequence belongs to the ATPase epsilon chain family. As to quaternary structure, F-type ATPases have 2 components, CF(1) - the catalytic core - and CF(0) - the membrane proton channel. CF(1) has five subunits: alpha(3), beta(3), gamma(1), delta(1), epsilon(1). CF(0) has three main subunits: a, b and c.

It is found in the cell inner membrane. In terms of biological role, produces ATP from ADP in the presence of a proton gradient across the membrane. This chain is ATP synthase epsilon chain, found in Actinobacillus pleuropneumoniae serotype 5b (strain L20).